Here is a 787-residue protein sequence, read N- to C-terminus: LPS-assembly protein LptD (787 aa).

Residues 1 to 78 (MAAGLPPLVV…AAGAAPAESG (78 aa)) form a disordered region. Positions 59-78 (LPPVGTPAEPAAGAAPAESG) are enriched in low complexity.

It belongs to the LptD family. In terms of assembly, component of the lipopolysaccharide transport and assembly complex. Interacts with LptE and LptA.

Functionally, together with LptE, is involved in the assembly of lipopolysaccharide (LPS) at the surface of the outer membrane. This Aromatoleum aromaticum (strain DSM 19018 / LMG 30748 / EbN1) (Azoarcus sp. (strain EbN1)) protein is LPS-assembly protein LptD.